Here is a 163-residue protein sequence, read N- to C-terminus: uncharacterized protein (163 aa).

2 consecutive transmembrane segments (helical) span residues 7 to 27 (YLNEIWLIIGIICILVECYIV) and 51 to 71 (LVIFTLTNQITFFGLFSLVWF).

It is found in the cell membrane. This is an uncharacterized protein from Rickettsia prowazekii (strain Madrid E).